A 177-amino-acid polypeptide reads, in one-letter code: Large ribosomal subunit protein uL6 (177 aa).

The protein belongs to the universal ribosomal protein uL6 family. Part of the 50S ribosomal subunit.

Its function is as follows. This protein binds to the 23S rRNA, and is important in its secondary structure. It is located near the subunit interface in the base of the L7/L12 stalk, and near the tRNA binding site of the peptidyltransferase center. The polypeptide is Large ribosomal subunit protein uL6 (Methylorubrum extorquens (strain CM4 / NCIMB 13688) (Methylobacterium extorquens)).